Consider the following 367-residue polypeptide: UDP-N-acetylglucosamine--N-acetylmuramyl-(pentapeptide) pyrophosphoryl-undecaprenol N-acetylglucosamine transferase (367 aa).

UDP-N-acetyl-alpha-D-glucosamine is bound by residues 13 to 15 (TGG), arginine 168, serine 196, isoleucine 252, and glutamine 297.

Belongs to the glycosyltransferase 28 family. MurG subfamily.

The protein resides in the cell inner membrane. The catalysed reaction is di-trans,octa-cis-undecaprenyl diphospho-N-acetyl-alpha-D-muramoyl-L-alanyl-D-glutamyl-meso-2,6-diaminopimeloyl-D-alanyl-D-alanine + UDP-N-acetyl-alpha-D-glucosamine = di-trans,octa-cis-undecaprenyl diphospho-[N-acetyl-alpha-D-glucosaminyl-(1-&gt;4)]-N-acetyl-alpha-D-muramoyl-L-alanyl-D-glutamyl-meso-2,6-diaminopimeloyl-D-alanyl-D-alanine + UDP + H(+). It participates in cell wall biogenesis; peptidoglycan biosynthesis. Cell wall formation. Catalyzes the transfer of a GlcNAc subunit on undecaprenyl-pyrophosphoryl-MurNAc-pentapeptide (lipid intermediate I) to form undecaprenyl-pyrophosphoryl-MurNAc-(pentapeptide)GlcNAc (lipid intermediate II). The chain is UDP-N-acetylglucosamine--N-acetylmuramyl-(pentapeptide) pyrophosphoryl-undecaprenol N-acetylglucosamine transferase from Methylibium petroleiphilum (strain ATCC BAA-1232 / LMG 22953 / PM1).